Consider the following 671-residue polypeptide: DNA ligase (671 aa).

NAD(+) contacts are provided by residues 32–36 (DAEYD), 81–82 (SL), and glutamate 113. Catalysis depends on lysine 115, which acts as the N6-AMP-lysine intermediate. Positions 136, 173, 290, and 314 each coordinate NAD(+). Cysteine 408, cysteine 411, cysteine 426, and cysteine 432 together coordinate Zn(2+). The region spanning 593 to 671 (EIDSPFAGKT…EAEMLRLLGV (79 aa)) is the BRCT domain.

The protein belongs to the NAD-dependent DNA ligase family. LigA subfamily. Mg(2+) serves as cofactor. Requires Mn(2+) as cofactor.

It carries out the reaction NAD(+) + (deoxyribonucleotide)n-3'-hydroxyl + 5'-phospho-(deoxyribonucleotide)m = (deoxyribonucleotide)n+m + AMP + beta-nicotinamide D-nucleotide.. Functionally, DNA ligase that catalyzes the formation of phosphodiester linkages between 5'-phosphoryl and 3'-hydroxyl groups in double-stranded DNA using NAD as a coenzyme and as the energy source for the reaction. It is essential for DNA replication and repair of damaged DNA. The chain is DNA ligase from Salmonella arizonae (strain ATCC BAA-731 / CDC346-86 / RSK2980).